The sequence spans 380 residues: Cytochrome b (380 aa).

4 helical membrane passes run 34–54 (FGSL…LLAM), 78–99 (WLIR…FLHI), 114–134 (WNTG…GYVL), and 179–199 (FFAL…IHLI). Residues H84 and H98 each contribute to the heme b site. Heme b is bound by residues H183 and H197. Residue H202 participates in a ubiquinone binding. Transmembrane regions (helical) follow at residues 227 to 247 (LKDI…ALFS), 289 to 309 (LGGV…PFLH), 321 to 341 (LSQT…WVGS), and 348 to 368 (FIII…ILFP).

Belongs to the cytochrome b family. As to quaternary structure, the cytochrome bc1 complex contains 11 subunits: 3 respiratory subunits (MT-CYB, CYC1 and UQCRFS1), 2 core proteins (UQCRC1 and UQCRC2) and 6 low-molecular weight proteins (UQCRH/QCR6, UQCRB/QCR7, UQCRQ/QCR8, UQCR10/QCR9, UQCR11/QCR10 and a cleavage product of UQCRFS1). This cytochrome bc1 complex then forms a dimer. Requires heme b as cofactor.

The protein localises to the mitochondrion inner membrane. Its function is as follows. Component of the ubiquinol-cytochrome c reductase complex (complex III or cytochrome b-c1 complex) that is part of the mitochondrial respiratory chain. The b-c1 complex mediates electron transfer from ubiquinol to cytochrome c. Contributes to the generation of a proton gradient across the mitochondrial membrane that is then used for ATP synthesis. This Tragopan temminckii (Temminck's tragopan) protein is Cytochrome b (MT-CYB).